Here is a 330-residue protein sequence, read N- to C-terminus: Probable transposase for insertion sequence element ISH11 (330 aa).

It belongs to the transposase 11 family.

In terms of biological role, involved in the transposition of the insertion sequence ISH11. The polypeptide is Probable transposase for insertion sequence element ISH11 (Halobacterium salinarum (strain ATCC 29341 / DSM 671 / R1)).